A 406-amino-acid polypeptide reads, in one-letter code: Bifunctional enzyme IspD/IspF (406 aa).

A 2-C-methyl-D-erythritol 4-phosphate cytidylyltransferase region spans residues 1–247 (MSLIRVNGEA…ALFFNPAKDT (247 aa)). The tract at residues 248 to 406 (FIGMGFDTHA…HVSMRYKQKL (159 aa)) is 2-C-methyl-D-erythritol 2,4-cyclodiphosphate synthase. The a divalent metal cation site is built by aspartate 254 and histidine 256. Residues 254–256 (DTH) and 280–281 (HS) contribute to the 4-CDP-2-C-methyl-D-erythritol 2-phosphate site. Histidine 288 contributes to the a divalent metal cation binding site. 4-CDP-2-C-methyl-D-erythritol 2-phosphate-binding positions include 302–304 (DIG), 307–311 (FPDND), 378–381 (TTME), phenylalanine 385, and lysine 388.

It in the N-terminal section; belongs to the IspD/TarI cytidylyltransferase family. IspD subfamily. The protein in the C-terminal section; belongs to the IspF family. A divalent metal cation is required as a cofactor.

It carries out the reaction 2-C-methyl-D-erythritol 4-phosphate + CTP + H(+) = 4-CDP-2-C-methyl-D-erythritol + diphosphate. The catalysed reaction is 4-CDP-2-C-methyl-D-erythritol 2-phosphate = 2-C-methyl-D-erythritol 2,4-cyclic diphosphate + CMP. The protein operates within isoprenoid biosynthesis; isopentenyl diphosphate biosynthesis via DXP pathway; isopentenyl diphosphate from 1-deoxy-D-xylulose 5-phosphate: step 2/6. It participates in isoprenoid biosynthesis; isopentenyl diphosphate biosynthesis via DXP pathway; isopentenyl diphosphate from 1-deoxy-D-xylulose 5-phosphate: step 4/6. Bifunctional enzyme that catalyzes the formation of 4-diphosphocytidyl-2-C-methyl-D-erythritol from CTP and 2-C-methyl-D-erythritol 4-phosphate (MEP) (IspD), and catalyzes the conversion of 4-diphosphocytidyl-2-C-methyl-D-erythritol 2-phosphate (CDP-ME2P) to 2-C-methyl-D-erythritol 2,4-cyclodiphosphate (ME-CPP) with a corresponding release of cytidine 5-monophosphate (CMP) (IspF). The protein is Bifunctional enzyme IspD/IspF of Helicobacter pylori (strain P12).